Consider the following 648-residue polypeptide: Biosynthetic arginine decarboxylase (648 aa).

Lysine 109 is modified (N6-(pyridoxal phosphate)lysine). Residue 291–301 coordinates substrate; it reads IDVGGGLGIDF.

This sequence belongs to the Orn/Lys/Arg decarboxylase class-II family. SpeA subfamily. Mg(2+) serves as cofactor. It depends on pyridoxal 5'-phosphate as a cofactor.

The catalysed reaction is L-arginine + H(+) = agmatine + CO2. Its pathway is amine and polyamine biosynthesis; agmatine biosynthesis; agmatine from L-arginine: step 1/1. Its function is as follows. Catalyzes the biosynthesis of agmatine from arginine. The sequence is that of Biosynthetic arginine decarboxylase from Prochlorococcus marinus (strain MIT 9215).